A 352-amino-acid polypeptide reads, in one-letter code: B1 bradykinin receptor (352 aa).

Residues 1–41 lie on the Extracellular side of the membrane; that stretch reads MASWPPLELQSSNQSQLFPQNATACDNAPEAWDLLHRVLPT. N-linked (GlcNAc...) asparagine glycosylation is found at Asn13 and Asn21. A helical membrane pass occupies residues 42-62; it reads FIISICSFGLLGNLFVLLVFL. Residues 63 to 72 lie on the Cytoplasmic side of the membrane; sequence LPRRRLNVAE. Residues 73 to 93 form a helical membrane-spanning segment; that stretch reads IYLANLAASDLVFVLGLPFWA. The Extracellular segment spans residues 94–110; that stretch reads ENIWNQFNWPFGALLCR. A disulfide bridge connects residues Cys109 and Cys188. The chain crosses the membrane as a helical span at residues 111-131; sequence GINGVIKANLFISIFLVVAIS. The Cytoplasmic segment spans residues 132–153; the sequence is QDRYCLLVHPMASRRRQRRRQA. The chain crosses the membrane as a helical span at residues 154 to 174; the sequence is RVTCVLIWVVGGLLSIPTFLL. Residues 175–206 lie on the Extracellular side of the membrane; it reads RSIQAVPDLNITACILLLPHEAWHFARIVELN. N-linked (GlcNAc...) asparagine glycosylation occurs at Asn184. Residues 207–227 form a helical membrane-spanning segment; sequence ILAFLLPLAAIVFFNYHILAS. Over 228-250 the chain is Cytoplasmic; it reads LRGREEVSRTRCGGRKDSKTTAL. Residues 251–271 form a helical membrane-spanning segment; it reads ILTLVVAFLVCWAPYHFFAFL. The Extracellular portion of the chain corresponds to 272-294; sequence EFLFQVQAIRSCFWEDFIDLGLQ. The chain crosses the membrane as a helical span at residues 295 to 315; that stretch reads LANFLAFTNSSLNPVIYVFVG. Residues 316–352 are Cytoplasmic-facing; that stretch reads RLFRTKVWELYKQCTPKSLAPISSSHRKEIFQLFWRN. Residue Cys329 is the site of S-palmitoyl cysteine attachment.

It belongs to the G-protein coupled receptor 1 family. Bradykinin receptor subfamily. BDKRB1 sub-subfamily.

The protein localises to the cell membrane. This is a receptor for bradykinin. Could be a factor in chronic pain and inflammation. This Chlorocebus pygerythrus (Vervet monkey) protein is B1 bradykinin receptor (BDKRB1).